The primary structure comprises 118 residues: Large ribosomal subunit protein bL19 (118 aa).

This sequence belongs to the bacterial ribosomal protein bL19 family.

Its function is as follows. This protein is located at the 30S-50S ribosomal subunit interface and may play a role in the structure and function of the aminoacyl-tRNA binding site. The protein is Large ribosomal subunit protein bL19 of Lactiplantibacillus plantarum (strain ATCC BAA-793 / NCIMB 8826 / WCFS1) (Lactobacillus plantarum).